Consider the following 413-residue polypeptide: NPL4-like protein 1 (413 aa).

Residue Ser104 is modified to Phosphoserine. One can recognise an MPN domain in the interval 131-272; the sequence is SVSFDRDCAN…ADVHFEPFQM (142 aa).

This sequence belongs to the NPL4 family.

The protein operates within protein degradation; proteasomal ubiquitin-dependent pathway. Functionally, may be part of a complex that binds ubiquitinated proteins and that is necessary for the export of misfolded proteins from the ER to the cytoplasm, where they are degraded by the proteasome. The polypeptide is NPL4-like protein 1 (Arabidopsis thaliana (Mouse-ear cress)).